The following is a 1372-amino-acid chain: DNA-directed RNA polymerase subunit beta (1372 aa).

It belongs to the RNA polymerase beta chain family. The RNAP catalytic core consists of 2 alpha, 1 beta, 1 beta' and 1 omega subunit. When a sigma factor is associated with the core the holoenzyme is formed, which can initiate transcription.

The catalysed reaction is RNA(n) + a ribonucleoside 5'-triphosphate = RNA(n+1) + diphosphate. In terms of biological role, DNA-dependent RNA polymerase catalyzes the transcription of DNA into RNA using the four ribonucleoside triphosphates as substrates. The protein is DNA-directed RNA polymerase subunit beta of Nitratidesulfovibrio vulgaris (strain DP4) (Desulfovibrio vulgaris).